Reading from the N-terminus, the 362-residue chain is Endolytic peptidoglycan transglycosylase RlpA (362 aa).

An N-terminal signal peptide occupies residues 1-17 (MRKQWLGICIAAGMLAA). The N-palmitoyl cysteine moiety is linked to residue Cys18. Cys18 carries the S-diacylglycerol cysteine lipid modification. The disordered stretch occupies residues 198–276 (PDLSGGAGTS…PSTTPATSPA (79 aa)). Low complexity predominate over residues 262–276 (PVVTAPSTTPATSPA). One can recognise an SPOR domain in the interval 285–361 (QSASGNFMVQ…AQLQSFITTA (77 aa)).

Belongs to the RlpA family.

It is found in the cell membrane. Lytic transglycosylase with a strong preference for naked glycan strands that lack stem peptides. In Escherichia coli (strain K12), this protein is Endolytic peptidoglycan transglycosylase RlpA.